Here is a 422-residue protein sequence, read N- to C-terminus: Phagosome assembly factor 1 (422 aa).

This sequence belongs to the PHAF1 family. As to quaternary structure, interacts with BCAS3; the interaction is requrired for the association with the phagophore.

Its subcellular location is the cytoplasm. The protein localises to the preautophagosomal structure. Plays a regulatory role in autophagic activity. In complex with BCAS3, associates with the autophagosome formation site during both non-selective and selective autophagy. This chain is Phagosome assembly factor 1, found in Homo sapiens (Human).